A 162-amino-acid polypeptide reads, in one-letter code: Protein-export protein SecB (162 aa).

It belongs to the SecB family. In terms of assembly, homotetramer, a dimer of dimers. One homotetramer interacts with 1 SecA dimer.

It is found in the cytoplasm. Its function is as follows. One of the proteins required for the normal export of preproteins out of the cell cytoplasm. It is a molecular chaperone that binds to a subset of precursor proteins, maintaining them in a translocation-competent state. It also specifically binds to its receptor SecA. This chain is Protein-export protein SecB, found in Pseudoalteromonas translucida (strain TAC 125).